The following is a 68-amino-acid chain: Large ribosomal subunit protein uL29 (68 aa).

The protein belongs to the universal ribosomal protein uL29 family.

The polypeptide is Large ribosomal subunit protein uL29 (Streptococcus gordonii (strain Challis / ATCC 35105 / BCRC 15272 / CH1 / DL1 / V288)).